Here is a 331-residue protein sequence, read N- to C-terminus: PHD finger protein 11 (331 aa).

Residues 42-78 (KRTCALCPKDVEYNVLYFAQSENIAAHENCLLYSSGL) form a C2HC pre-PHD-type zinc finger. A PHD-type zinc finger spans residues 108 to 160 (LKCKFCHKRGATVGCDLKNCNKNYHFFCAKKDDAVPQSDGVRGIYKLLCQQHA).

Interacts with BRCA1 and RELA. In terms of tissue distribution, highly expressed in T and B-cells, as well as natural killer and mature dendritic cells. Expressed at higher levels in Th1 as compared to Th2 cells. Expressed at low levels in all normal tissues tested, including lung, testis, small intestine, breast, liver and placenta.

The protein localises to the nucleus. In terms of biological role, positive regulator of Th1-type cytokine gene expression. This chain is PHD finger protein 11 (PHF11), found in Homo sapiens (Human).